The chain runs to 37 residues: ATP synthase subunit O, mitochondrial (37 aa).

This sequence belongs to the ATPase delta chain family. F-type ATPases have 2 components, CF(1) - the catalytic core - and CF(0) - the membrane proton channel. CF(1) has five subunits: alpha(3), beta(3), gamma(1), delta(1), epsilon(1). CF(0) has three main subunits: a, b and c.

Its subcellular location is the mitochondrion. It is found in the mitochondrion inner membrane. Mitochondrial membrane ATP synthase (F(1)F(0) ATP synthase or Complex V) produces ATP from ADP in the presence of a proton gradient across the membrane which is generated by electron transport complexes of the respiratory chain. F-type ATPases consist of two structural domains, F(1) - containing the extramembraneous catalytic core and F(0) - containing the membrane proton channel, linked together by a central stalk and a peripheral stalk. During catalysis, ATP synthesis in the catalytic domain of F(1) is coupled via a rotary mechanism of the central stalk subunits to proton translocation. Part of the complex F(0) domain and the peripheric stalk, which acts as a stator to hold the catalytic alpha(3)beta(3) subcomplex and subunit a/ATP6 static relative to the rotary elements. This chain is ATP synthase subunit O, mitochondrial, found in Solanum tuberosum (Potato).